We begin with the raw amino-acid sequence, 538 residues long: Probable bifunctional tRNA threonylcarbamoyladenosine biosynthesis protein (538 aa).

Positions 1-327 (MIVLICLGIE…FRTDEVEAPW (327 aa)) are kae1. Residues H111, H115, and Y132 each coordinate Fe cation. Residues 132-136 (YVSGG), D164, G177, E181, and N260 contribute to the L-threonylcarbamoyladenylate site. A Fe cation-binding site is contributed by D288. Residues 336 to 538 (KLPDNLIAKG…EIESRGRYTH (203 aa)) enclose the Protein kinase domain. ATP is bound by residues 342–350 (IAKGAESDI) and K363. The active-site Proton acceptor; for kinase activity is D452.

It in the N-terminal section; belongs to the KAE1 / TsaD family. In the C-terminal section; belongs to the protein kinase superfamily. Tyr protein kinase family. BUD32 subfamily. Component of the KEOPS complex that consists of Kae1, Bud32, Cgi121 and Pcc1; the whole complex dimerizes. Fe(2+) is required as a cofactor.

The protein localises to the cytoplasm. It catalyses the reaction L-seryl-[protein] + ATP = O-phospho-L-seryl-[protein] + ADP + H(+). It carries out the reaction L-threonyl-[protein] + ATP = O-phospho-L-threonyl-[protein] + ADP + H(+). The enzyme catalyses L-threonylcarbamoyladenylate + adenosine(37) in tRNA = N(6)-L-threonylcarbamoyladenosine(37) in tRNA + AMP + H(+). Functionally, required for the formation of a threonylcarbamoyl group on adenosine at position 37 (t(6)A37) in tRNAs that read codons beginning with adenine. Is a component of the KEOPS complex that is probably involved in the transfer of the threonylcarbamoyl moiety of threonylcarbamoyl-AMP (TC-AMP) to the N6 group of A37. The Kae1 domain likely plays a direct catalytic role in this reaction. The Bud32 domain probably displays kinase activity that regulates Kae1 function. This Methanobrevibacter smithii (strain ATCC 35061 / DSM 861 / OCM 144 / PS) protein is Probable bifunctional tRNA threonylcarbamoyladenosine biosynthesis protein.